Consider the following 398-residue polypeptide: Phosphoglycerate kinase (398 aa).

Substrate is bound by residues 21 to 23 (DFN), R36, 59 to 62 (HLGR), R119, and R157. ATP is bound by residues K208, G296, E327, and 354-357 (GGDS).

The protein belongs to the phosphoglycerate kinase family. Monomer.

It localises to the cytoplasm. It carries out the reaction (2R)-3-phosphoglycerate + ATP = (2R)-3-phospho-glyceroyl phosphate + ADP. The protein operates within carbohydrate degradation; glycolysis; pyruvate from D-glyceraldehyde 3-phosphate: step 2/5. This chain is Phosphoglycerate kinase, found in Streptococcus equi subsp. equi (strain 4047).